Here is a 307-residue protein sequence, read N- to C-terminus: Junctional adhesion molecule 2A (307 aa).

Residues 1 to 18 form the signal peptide; the sequence is MLVCVSLLILIHSVPVSP. The 94-residue stretch at 19–112 folds into the Ig-like V-type domain; that stretch reads VTVSSRNPKV…EVSAPSDSIS (94 aa). The Extracellular segment spans residues 19–226; it reads VTVSSRNPKV…FQTHDLNVAA (208 aa). 2 cysteine pairs are disulfide-bonded: Cys40–Cys102 and Cys147–Cys197. Residues 126 to 225 enclose the Ig-like C2-type domain; sequence PQTPSCDVPS…TFQTHDLNVA (100 aa). A helical membrane pass occupies residues 227–247; that stretch reads VVSAVVLVCVILFLCAFGVCL. The Cytoplasmic segment spans residues 248–307; it reads AHRQGYFSRHRGRSFWIPHCHGVTHISSQNLNPSEHTQHSGYSHPPKEPQDFKHTQSFML. A compositionally biased stretch (polar residues) spans 278–288; it reads LNPSEHTQHSG. Positions 278–307 are disordered; the sequence is LNPSEHTQHSGYSHPPKEPQDFKHTQSFML. Over residues 292 to 301 the composition is skewed to basic and acidic residues; that stretch reads PPKEPQDFKH.

The protein belongs to the immunoglobulin superfamily.

Its subcellular location is the cell membrane. It localises to the cell junction. The protein resides in the tight junction. In terms of biological role, junctional adhesion protein that mediates heterotypic cell-cell interactions to regulate different cellular processes. During myogenesis, it is involved in myocyte fusion through the binding of jam3b on neighboring myocytes. The sequence is that of Junctional adhesion molecule 2A (jam2a) from Danio rerio (Zebrafish).